The primary structure comprises 128 residues: Fluoride-specific ion channel FluC (128 aa).

Helical transmembrane passes span 4–24, 37–57, 63–83, and 99–119; these read LILA…RYLI, PYGT…IMDI, LISG…LTTF, and ILMG…GVII. 2 residues coordinate Na(+): glycine 78 and threonine 81.

Belongs to the fluoride channel Fluc/FEX (TC 1.A.43) family.

The protein resides in the cell membrane. The catalysed reaction is fluoride(in) = fluoride(out). Na(+) is not transported, but it plays an essential structural role and its presence is essential for fluoride channel function. Fluoride-specific ion channel. Important for reducing fluoride concentration in the cell, thus reducing its toxicity. This Clostridium novyi (strain NT) protein is Fluoride-specific ion channel FluC.